The primary structure comprises 160 residues: Cytochrome b6-f complex subunit 4 (160 aa).

The next 3 helical transmembrane spans lie at L36 to V56, L95 to E115, and T131 to I151.

It belongs to the cytochrome b family. PetD subfamily. The 4 large subunits of the cytochrome b6-f complex are cytochrome b6, subunit IV (17 kDa polypeptide, petD), cytochrome f and the Rieske protein, while the 4 small subunits are petG, petL, petM and petN. The complex functions as a dimer.

The protein resides in the plastid. It localises to the chloroplast thylakoid membrane. In terms of biological role, component of the cytochrome b6-f complex, which mediates electron transfer between photosystem II (PSII) and photosystem I (PSI), cyclic electron flow around PSI, and state transitions. This Tetradesmus obliquus (Green alga) protein is Cytochrome b6-f complex subunit 4.